Consider the following 740-residue polypeptide: Catalase-peroxidase (740 aa).

Residues 1-14 (MTENHDAIVTDAKS) show a composition bias toward basic and acidic residues. Residues 1 to 21 (MTENHDAIVTDAKSEGSGGCP) form a disordered region. Positions 108-231 (WHSAGTYRIS…LGAVQMGLIY (124 aa)) form a cross-link, tryptophyl-tyrosyl-methioninium (Trp-Tyr) (with M-257). Residue His-109 is the Proton acceptor of the active site. A cross-link (tryptophyl-tyrosyl-methioninium (Tyr-Met) (with W-108)) is located at residues 231-257 (YVNPEGPNGNPDPIAAARDIRETFRRM). His-272 is a heme b binding site.

The protein belongs to the peroxidase family. Peroxidase/catalase subfamily. Homodimer. The cofactor is heme b. In terms of processing, formation of the three residue Trp-Tyr-Met cross-link is important for the catalase, but not the peroxidase activity of the enzyme.

The enzyme catalyses H2O2 + AH2 = A + 2 H2O. It carries out the reaction 2 H2O2 = O2 + 2 H2O. Bifunctional enzyme with both catalase and broad-spectrum peroxidase activity. In Streptomyces reticuli, this protein is Catalase-peroxidase.